The primary structure comprises 410 residues: Arginine deiminase (410 aa).

Residue Cys400 is the Amidino-cysteine intermediate of the active site.

Belongs to the arginine deiminase family.

Its subcellular location is the cytoplasm. The catalysed reaction is L-arginine + H2O = L-citrulline + NH4(+). It participates in amino-acid degradation; L-arginine degradation via ADI pathway; carbamoyl phosphate from L-arginine: step 1/2. The chain is Arginine deiminase from Lactococcus lactis subsp. cremoris (strain MG1363).